Reading from the N-terminus, the 716-residue chain is uncharacterized protein (716 aa).

Disordered stretches follow at residues 84 to 103 (SPSI…ERYP) and 153 to 189 (VTDE…SQTQ). Position 97 is a phosphoserine (S97). Residues K201, K204, K237, K283, and K626 each participate in a glycyl lysine isopeptide (Lys-Gly) (interchain with G-Cter in SUMO2) cross-link.

This is an uncharacterized protein from Homo sapiens (Human).